A 131-amino-acid polypeptide reads, in one-letter code: Large ribosomal subunit protein bL12 (131 aa).

Belongs to the bacterial ribosomal protein bL12 family. In terms of assembly, homodimer. Part of the ribosomal stalk of the 50S ribosomal subunit. Forms a multimeric L10(L12)X complex, where L10 forms an elongated spine to which 2 to 4 L12 dimers bind in a sequential fashion. Binds GTP-bound translation factors.

Functionally, forms part of the ribosomal stalk which helps the ribosome interact with GTP-bound translation factors. Is thus essential for accurate translation. This Prochlorococcus marinus (strain MIT 9312) protein is Large ribosomal subunit protein bL12.